The sequence spans 198 residues: Protein GrpE (198 aa).

Belongs to the GrpE family. As to quaternary structure, homodimer.

It is found in the cytoplasm. Participates actively in the response to hyperosmotic and heat shock by preventing the aggregation of stress-denatured proteins, in association with DnaK and GrpE. It is the nucleotide exchange factor for DnaK and may function as a thermosensor. Unfolded proteins bind initially to DnaJ; upon interaction with the DnaJ-bound protein, DnaK hydrolyzes its bound ATP, resulting in the formation of a stable complex. GrpE releases ADP from DnaK; ATP binding to DnaK triggers the release of the substrate protein, thus completing the reaction cycle. Several rounds of ATP-dependent interactions between DnaJ, DnaK and GrpE are required for fully efficient folding. This chain is Protein GrpE, found in Vibrio harveyi (Beneckea harveyi).